A 301-amino-acid chain; its full sequence is Acetylglutamate kinase (301 aa).

Substrate-binding positions include 72 to 73, R94, and N199; that span reads GG.

This sequence belongs to the acetylglutamate kinase family. ArgB subfamily.

The protein localises to the cytoplasm. It catalyses the reaction N-acetyl-L-glutamate + ATP = N-acetyl-L-glutamyl 5-phosphate + ADP. It functions in the pathway amino-acid biosynthesis; L-arginine biosynthesis; N(2)-acetyl-L-ornithine from L-glutamate: step 2/4. Catalyzes the ATP-dependent phosphorylation of N-acetyl-L-glutamate. This chain is Acetylglutamate kinase, found in Bartonella henselae (strain ATCC 49882 / DSM 28221 / CCUG 30454 / Houston 1) (Rochalimaea henselae).